The sequence spans 101 residues: Putative pterin-4-alpha-carbinolamine dehydratase (101 aa).

This sequence belongs to the pterin-4-alpha-carbinolamine dehydratase family.

It catalyses the reaction (4aS,6R)-4a-hydroxy-L-erythro-5,6,7,8-tetrahydrobiopterin = (6R)-L-erythro-6,7-dihydrobiopterin + H2O. This chain is Putative pterin-4-alpha-carbinolamine dehydratase (phhB), found in Ralstonia nicotianae (strain ATCC BAA-1114 / GMI1000) (Ralstonia solanacearum).